Here is a 114-residue protein sequence, read N- to C-terminus: UPF0145 protein PYRAB04900 (114 aa).

It belongs to the UPF0145 family.

The protein is UPF0145 protein PYRAB04900 of Pyrococcus abyssi (strain GE5 / Orsay).